We begin with the raw amino-acid sequence, 453 residues long: Serine--tRNA ligase (453 aa).

L-serine is bound at residue 249-251 (TSE). Residues 280-282 (RKE) and valine 296 contribute to the ATP site. Glutamate 303 provides a ligand contact to L-serine. 367 to 370 (EMVS) provides a ligand contact to ATP. Threonine 404 is an L-serine binding site.

It belongs to the class-II aminoacyl-tRNA synthetase family. Type-1 seryl-tRNA synthetase subfamily. In terms of assembly, homodimer. The tRNA molecule binds across the dimer.

The protein localises to the cytoplasm. It catalyses the reaction tRNA(Ser) + L-serine + ATP = L-seryl-tRNA(Ser) + AMP + diphosphate + H(+). It carries out the reaction tRNA(Sec) + L-serine + ATP = L-seryl-tRNA(Sec) + AMP + diphosphate + H(+). It functions in the pathway aminoacyl-tRNA biosynthesis; selenocysteinyl-tRNA(Sec) biosynthesis; L-seryl-tRNA(Sec) from L-serine and tRNA(Sec): step 1/1. Its function is as follows. Catalyzes the attachment of serine to tRNA(Ser). Is also able to aminoacylate tRNA(Sec) with serine, to form the misacylated tRNA L-seryl-tRNA(Sec), which will be further converted into selenocysteinyl-tRNA(Sec). This Archaeoglobus fulgidus (strain ATCC 49558 / DSM 4304 / JCM 9628 / NBRC 100126 / VC-16) protein is Serine--tRNA ligase.